The primary structure comprises 711 residues: Zinc finger CCCH domain-containing protein 43 (711 aa).

The segment at 1 to 49 (MPQDDDWFWGRPTPVVVGDGETTSKPKPPVAGKTKKVEEQHPRRPGEPD) is disordered. The span at 35-47 (KKVEEQHPRRPGE) shows a compositional bias: basic and acidic residues. 3 C3H1-type zinc fingers span residues 44-72 (RPGEPDCSYYVKFGSCKFGISCVYNHPDP), 90-118 (RPGEPDCSYYVKFGSCKFGMNCRFNHPPR), and 157-185 (RPGTGLCSYYMNRGICKFGTNCKFDHPDP). The 254-residue stretch at 384-637 (LKTLKSILNT…GAISYLIEKE (254 aa)) folds into the MIF4G domain.

The polypeptide is Zinc finger CCCH domain-containing protein 43 (Oryza sativa subsp. japonica (Rice)).